A 205-amino-acid chain; its full sequence is Cytochrome c oxidase subunit 2 (205 aa).

Positions 115, 150, 152, 154, 158, and 161 each coordinate Cu cation. Glu152 serves as a coordination point for Mg(2+).

Belongs to the cytochrome c oxidase subunit 2 family. In terms of assembly, component of the cytochrome c oxidase (complex IV, CIV), a multisubunit enzyme composed of a catalytic core of 3 subunits and several supernumerary subunits. The complex exists as a monomer or a dimer and forms supercomplexes (SCs) in the inner mitochondrial membrane with ubiquinol-cytochrome c oxidoreductase (cytochrome b-c1 complex, complex III, CIII). The cofactor is Cu cation.

It is found in the mitochondrion inner membrane. It carries out the reaction 4 Fe(II)-[cytochrome c] + O2 + 8 H(+)(in) = 4 Fe(III)-[cytochrome c] + 2 H2O + 4 H(+)(out). Its function is as follows. Component of the cytochrome c oxidase, the last enzyme in the mitochondrial electron transport chain which drives oxidative phosphorylation. The respiratory chain contains 3 multisubunit complexes succinate dehydrogenase (complex II, CII), ubiquinol-cytochrome c oxidoreductase (cytochrome b-c1 complex, complex III, CIII) and cytochrome c oxidase (complex IV, CIV), that cooperate to transfer electrons derived from NADH and succinate to molecular oxygen, creating an electrochemical gradient over the inner membrane that drives transmembrane transport and the ATP synthase. Cytochrome c oxidase is the component of the respiratory chain that catalyzes the reduction of oxygen to water. Electrons originating from reduced cytochrome c in the intermembrane space (IMS) are transferred via the dinuclear copper A center (CU(A)) of subunit 2 and heme A of subunit 1 to the active site in subunit 1, a binuclear center (BNC) formed by heme A3 and copper B (CU(B)). The BNC reduces molecular oxygen to 2 water molecules using 4 electrons from cytochrome c in the IMS and 4 protons from the mitochondrial matrix. The protein is Cytochrome c oxidase subunit 2 (COII) of Paramecium tetraurelia.